Here is a 350-residue protein sequence, read N- to C-terminus: Protein SGT1 homolog A (350 aa).

3 TPR repeats span residues 2 to 35 (AKEL…DPNC), 37 to 69 (EFFA…DPSL), and 71 to 103 (KAYL…TPSE). The CS domain maps to 149-238 (TAKYRHEYYQ…ADIITWASLE (90 aa)). In terms of domain architecture, SGS spans 260-350 (AYPSSKKVKD…DGMELKKWEI (91 aa)).

This sequence belongs to the SGT1 family. In terms of assembly, interacts with RAR1. Forms a ternary complex with RAR1 and barley HSP90.

Its function is as follows. Functions in R gene-mediated resistance, but participates in a lower extent than SGT1B to RPP5-mediated resistance. Not required for RPM1, RPS2, RPS4 and RPS5-mediated resistance. Probably required for SCF-mediated ubiquitination, by coupling HSP90 to SCF complex for ubiquitination of HSP90 client proteins. The protein is Protein SGT1 homolog A (SGT1A) of Arabidopsis thaliana (Mouse-ear cress).